The following is a 708-amino-acid chain: Quinohemoprotein alcohol dehydrogenase (708 aa).

An N-terminal signal peptide occupies residues Met-1 to Gln-31. Residue Glu-101 coordinates pyrroloquinoline quinone. Residues Cys-147 and Cys-148 are joined by a disulfide bond. Pyrroloquinoline quinone contacts are provided by residues Arg-153, Thr-198, and Gly-214–Ala-215. Glu-216 serves as a coordination point for Ca(2+). Thr-274 is a binding site for pyrroloquinoline quinone. Residues Asn-294 and Asp-339 each contribute to the Ca(2+) site. The Proton acceptor role is filled by Asp-339. Pyrroloquinoline quinone-binding positions include Lys-366, Asn-425–Trp-426, and Val-575. One can recognise a Cytochrome c domain in the interval Tyr-619–Pro-708. Cys-635, Cys-638, His-639, and Met-678 together coordinate heme c.

The protein belongs to the bacterial PQQ dehydrogenase family. Monomer. Pyrroloquinoline quinone is required as a cofactor. It depends on Ca(2+) as a cofactor. The cofactor is heme c. In terms of processing, in the crystallographic structures Trp-543 is oxidized to 2'-hydroxytryptophan.

The protein resides in the periplasm. It catalyses the reaction 2 oxidized [azurin] + a primary alcohol = 2 reduced [azurin] + an aldehyde + 2 H(+). In terms of biological role, catalyzes the dye-linked oxidation of primary alcohols to the corresponding aldehydes and the (subsequent) oxidation of the aldehydes to carboxylic acids. Methanol is not a substrate. In Comamonas testosteroni (Pseudomonas testosteroni), this protein is Quinohemoprotein alcohol dehydrogenase.